Consider the following 115-residue polypeptide: Holo-[acyl-carrier-protein] synthase (115 aa).

Positions 6 and 51 each coordinate Mg(2+).

The protein belongs to the P-Pant transferase superfamily. AcpS family. Mg(2+) is required as a cofactor.

The protein localises to the cytoplasm. It catalyses the reaction apo-[ACP] + CoA = holo-[ACP] + adenosine 3',5'-bisphosphate + H(+). Functionally, transfers the 4'-phosphopantetheine moiety from coenzyme A to a Ser of acyl-carrier-protein. In Campylobacter jejuni (strain RM1221), this protein is Holo-[acyl-carrier-protein] synthase.